The following is a 440-amino-acid chain: Tumor necrosis factor receptor superfamily member 10B (440 aa).

Disordered regions lie at residues 1–32 (MEQRGQNAPAASGARKRHGPGPREARGARPGP) and 60–84 (DLAPQQRAAPQQKRSSPSEGLCPPG). The first 55 residues, 1 to 55 (MEQRGQNAPAASGARKRHGPGPREARGARPGPRVPKTLVLVVAAVLLLVSAESAL), serve as a signal peptide directing secretion. The Extracellular portion of the chain corresponds to 56–210 (ITQQDLAPQQ…SPGTPASPCS (155 aa)). TNFR-Cys repeat units lie at residues 57-94 (TQQDLAPQQRAAPQQKRSSPSEGLCPPGHHISEDGRDC), 97-137 (CKYG…NTVC), and 138-178 (QCEE…DIEC). Over residues 60–71 (DLAPQQRAAPQQ) the composition is skewed to low complexity. 7 cysteine pairs are disulfide-bonded: C81/C94, C97/C113, C116/C129, C119/C137, C139/C153, C156/C170, and C160/C178. The TAPE repeat unit spans residues 192-206 (PAVEETVTSSPGTPA). The chain crosses the membrane as a helical span at residues 211–231 (LSGIIIGVTVAAVVLIVAVFV). Residues 232 to 440 (CKSLLWKKVL…LEGNADSAMS (209 aa)) lie on the Cytoplasmic side of the membrane. Residues 339-422 (RQCFDDFADL…LAKQKIEDHL (84 aa)) enclose the Death domain.

As to quaternary structure, monomer. Can interact with TRADD and RIPK1. Interacts with HCMV protein UL141; this interaction prevents TNFRSF10B cell surface expression. Two TNFRSF10B monomers interact with a UL141 homodimer. Three TNFRSF10B molecules interact with TNFSF10 homotrimer. In the absence of stimulation, interacts with BIRC2, DDX3X and GSK3B. The interaction with BIRC2 and DDX3X is further enhanced upon receptor stimulation and accompanied by DDX3X and BIRC2 cleavage. Post-translationally, (Microbial infection) Glycosylated on Arg residue by S.typhimurium protein Ssek3. Widely expressed in adult and fetal tissues; very highly expressed in tumor cell lines such as HeLaS3, K-562, HL-60, SW480, A-549 and G-361; highly expressed in heart, peripheral blood lymphocytes, liver, pancreas, spleen, thymus, prostate, ovary, uterus, placenta, testis, esophagus, stomach and throughout the intestinal tract; not detectable in brain.

Its subcellular location is the membrane. Its function is as follows. Receptor for the cytotoxic ligand TNFSF10/TRAIL. The adapter molecule FADD recruits caspase-8 to the activated receptor. The resulting death-inducing signaling complex (DISC) performs caspase-8 proteolytic activation which initiates the subsequent cascade of caspases (aspartate-specific cysteine proteases) mediating apoptosis. Promotes the activation of NF-kappa-B. Essential for ER stress-induced apoptosis. The sequence is that of Tumor necrosis factor receptor superfamily member 10B (TNFRSF10B) from Homo sapiens (Human).